Consider the following 442-residue polypeptide: Elongation factor 1-alpha 1 (442 aa).

In terms of domain architecture, tr-type G spans 5 to 227 (KEHLNLVVIG…AALDSFKIPK (223 aa)). Positions 14–21 (GHVDSGKS) are G1. 14-21 (GHVDSGKS) provides a ligand contact to GTP. The interval 70–74 (GITID) is G2. A G3 region spans residues 91-94 (DAPG). GTP-binding positions include 91–95 (DAPGH) and 153–156 (NKMD). The G4 stretch occupies residues 153 to 156 (NKMD). Residues 194–196 (SGF) form a G5 region.

The protein belongs to the TRAFAC class translation factor GTPase superfamily. Classic translation factor GTPase family. EF-Tu/EF-1A subfamily.

The protein localises to the cytoplasm. Its function is as follows. This protein promotes the GTP-dependent binding of aminoacyl-tRNA to the A-site of ribosomes during protein biosynthesis. The protein is Elongation factor 1-alpha 1 (EFA1) of Euplotes crassus.